The sequence spans 60 residues: MIKNIRITQTRSSIGCLPKHKATLAGLGLRRIGHAVERQDNPVIQGMINLISYMVKVEKQ.

This sequence belongs to the universal ribosomal protein uL30 family. As to quaternary structure, part of the 50S ribosomal subunit.

The polypeptide is Large ribosomal subunit protein uL30 (Baumannia cicadellinicola subsp. Homalodisca coagulata).